Here is a 446-residue protein sequence, read N- to C-terminus: Palmitoyltransferase PFA4 (446 aa).

Over 1-8 (MAVQLKWP) the chain is Cytoplasmic. The chain crosses the membrane as a helical span at residues 9-29 (ILGVIIPCIIIFSLSYGSHYF). Over 30-40 (ILRHHLTMKQQ) the chain is Lumenal. Residues 41–61 (LIYEFYVTMIWISYLLAIYTN) traverse the membrane as a helical segment. The Cytoplasmic portion of the chain corresponds to 62–161 (PGRVPKNYKP…GNNNLPHFMR (100 aa)). The DHHC domain maps to 114 to 164 (RYCKKCNNYKPPRSHHCKICQQCVLQMDHHCPWTLNCVGNNNLPHFMRFLG). Cysteine 144 serves as the catalytic S-palmitoyl cysteine intermediate. A helical transmembrane segment spans residues 162-182 (FLGWIIWGTGYLMIQLIKLII). At 183-201 (NYYENSNMPHYLFNKTELV) the chain is on the lumenal side. The chain crosses the membrane as a helical span at residues 202–222 (AIIAITPLNFFVFASILVLFI). The Cytoplasmic segment spans residues 223 to 446 (RCLINICKGM…TDFGVDEDSD (224 aa)).

Belongs to the DHHC palmitoyltransferase family. PFA4 subfamily.

The protein resides in the endoplasmic reticulum membrane. The catalysed reaction is L-cysteinyl-[protein] + hexadecanoyl-CoA = S-hexadecanoyl-L-cysteinyl-[protein] + CoA. Mediates the reversible addition of palmitate to target proteins, thereby regulating their membrane association and biological function. In Candida albicans (strain SC5314 / ATCC MYA-2876) (Yeast), this protein is Palmitoyltransferase PFA4.